The following is a 228-amino-acid chain: Cytochrome b-c1 complex subunit Rieske, mitochondrial (228 aa).

The transit peptide at methionine 1–serine 26 directs the protein to the mitochondrion. Topologically, residues serine 27–aspartate 63 are mitochondrial matrix. The chain crosses the membrane as a helical span at residues arginine 64–alanine 93. The Mitochondrial intermembrane segment spans residues serine 94 to glycine 228. A Rieske domain is found at isoleucine 139–isoleucine 227. [2Fe-2S] cluster contacts are provided by cysteine 172, histidine 174, cysteine 191, and histidine 194. Cysteine 177 and cysteine 193 are disulfide-bonded.

This sequence belongs to the Rieske iron-sulfur protein family. In terms of assembly, component of the ubiquinol-cytochrome c oxidoreductase (cytochrome b-c1 complex, complex III, CIII), a multisubunit enzyme composed of 3 respiratory subunits cytochrome b, cytochrome c1 and Rieske protein, 2 core protein subunits, and additional low-molecular weight protein subunits. The complex exists as an obligatory dimer and forms supercomplexes (SCs) in the inner mitochondrial membrane with cytochrome c oxidase (complex IV, CIV). Requires [2Fe-2S] cluster as cofactor.

It is found in the mitochondrion inner membrane. The catalysed reaction is a quinol + 2 Fe(III)-[cytochrome c](out) = a quinone + 2 Fe(II)-[cytochrome c](out) + 2 H(+)(out). Functionally, component of the ubiquinol-cytochrome c oxidoreductase, a multisubunit transmembrane complex that is part of the mitochondrial electron transport chain which drives oxidative phosphorylation. The respiratory chain contains 3 multisubunit complexes succinate dehydrogenase (complex II, CII), ubiquinol-cytochrome c oxidoreductase (cytochrome b-c1 complex, complex III, CIII) and cytochrome c oxidase (complex IV, CIV), that cooperate to transfer electrons derived from NADH and succinate to molecular oxygen, creating an electrochemical gradient over the inner membrane that drives transmembrane transport and the ATP synthase. The cytochrome b-c1 complex catalyzes electron transfer from ubiquinol to cytochrome c, linking this redox reaction to translocation of protons across the mitochondrial inner membrane, with protons being carried across the membrane as hydrogens on the quinol. In the process called Q cycle, 2 protons are consumed from the matrix, 4 protons are released into the intermembrane space and 2 electrons are passed to cytochrome c. The Rieske protein is a catalytic core subunit containing a [2Fe-2S] iron-sulfur cluster. It cycles between 2 conformational states during catalysis to transfer electrons from the quinol bound in the Q(0) site in cytochrome b to cytochrome c1. This Schizosaccharomyces pombe (strain 972 / ATCC 24843) (Fission yeast) protein is Cytochrome b-c1 complex subunit Rieske, mitochondrial (rip1).